We begin with the raw amino-acid sequence, 362 residues long: 45 kDa calcium-binding protein (362 aa).

Residues 1–36 (MVWPWVAMASRWGPLIGLAPCCLWLLGAVLLMDASA) form the signal peptide. The N-linked (GlcNAc...) asparagine glycan is linked to N40. 2 EF-hand domains span residues 98 to 133 (RSRRKLMVIFSKVDVNTDRKISAKEMQRWIMEKTAE) and 137 to 172 (EAMEESKTHFRAVDPDGDGHVSWDEYKVKFLASKGH). S99 carries the post-translational modification Phosphoserine. D111, N113, D115, K117, E122, D150, D152, D154, H156, and E161 together coordinate Ca(2+). Residue T193 is modified to Phosphothreonine. EF-hand domains follow at residues 197–232 (LENLKDRWYQADSPPADLLLTEEEFLSFLHPEHSRG), 233–268 (MLRFMVKEIVRDLDQDGDKQLSVPEFISLPVGTVEN), 278–313 (WVKDRKKEFEELIDSNHDGIVTAEELESYMDPMNEY), and 314–349 (NALNEAKQMIAVADENQNHHLEPEEVLKYSEFFTGS). A Ca(2+)-binding site is contributed by D213. A Phosphothreonine modification is found at T217. Ca(2+) is bound by residues E220, D246, D248, D250, Q252, and E257. At T265 the chain carries Phosphothreonine. D291, N293, and D295 together coordinate Ca(2+). At T299 the chain carries Phosphothreonine. The Ca(2+) site is built by E302, D327, N329, N331, H333, and E338. Positions 309–362 (PMNEYNALNEAKQMIAVADENQNHHLEPEEVLKYSEFFTGSKLVDYARSVHEEF) are necessary for intracellular retention in Golgi apparatus lumen.

It belongs to the CREC family. As to quaternary structure, isoform 5 interacts with STXBP1; the interaction is enhanced in presence of calcium. Isoform 5 interacts with STX3. In terms of tissue distribution, ubiquitous. Isoform 5 is expressed in pancreas.

The protein resides in the golgi apparatus lumen. The protein localises to the cytoplasm. It is found in the cell membrane. It localises to the cell projection. Its subcellular location is the bleb. Its function is as follows. May regulate calcium-dependent activities in the endoplasmic reticulum lumen or post-ER compartment. Functionally, isoform 5 may be involved in the exocytosis of zymogens by pancreatic acini. The protein is 45 kDa calcium-binding protein (SDF4) of Homo sapiens (Human).